Reading from the N-terminus, the 137-residue chain is NTF2-related export protein (137 aa).

The NTF2 domain occupies 19–135; that stretch reads ESKKFMDVYY…YKVKSDRFRY (117 aa).

In terms of assembly, preferentially binds Ran-GTP.

It is found in the nucleus. Stimulator of protein export for NES-containing proteins. Also plays a role in the nuclear export of U1 snRNA, tRNA, and mRNA. This chain is NTF2-related export protein (nxt-1), found in Caenorhabditis elegans.